The chain runs to 4383 residues: Replicase polyprotein 1a (4383 aa).

The region spanning 54 to 196 (PENHVMVDCR…PWVMYLRKRG (143 aa)) is the CoV Nsp1 globular domain. In terms of domain architecture, BetaCoV Nsp1 C-terminal spans 216–246 (FKVEDAYDQVHDEPKGKFSKKAYALIRGYRG). One can recognise a CoV Nsp2 N-terminal domain in the interval 250 to 514 (LLYVDQYGCD…VKETNLICKA (265 aa)). Zn(2+)-binding residues include Cys392, Cys397, Cys413, and Cys416. The segment at 392 to 416 (CEQDSCDFKGWIPGNMIDGFACTTC) is C4. The region spanning 524–713 (CGNLHQRELL…AQAFQSVAKV (190 aa)) is the CoV Nsp2 middle domain. The CoV Nsp2 C-terminal domain occupies 733-851 (RRRICLSGRK…LDQAWRVPCA (119 aa)). A Ubiquitin-like 1 domain is found at 853-966 (RRVTFKEQPT…LYCAFTAPED (114 aa)). The disordered stretch occupies residues 995-1025 (PCVASEQEESSEVLEDTLDDGPSVETSDSQV). The span at 1000–1013 (EQEESSEVLEDTLD) shows a compositional bias: acidic residues. The Peptidase C16 1 domain maps to 1036-1274 (DLESVIQDYE…IAQLYGSCIT (239 aa)). Cys1074 acts as the For PL1-PRO activity in catalysis. Zn(2+) is bound by residues Cys1151, Cys1154, Cys1177, and Cys1179. Residues 1151-1179 (CIKCDLALKLKGLDAMFFYGDVVSHICKC) form a C4-type 1 zinc finger. Active-site for PL1-PRO activity residues include His1225 and Asp1236. One can recognise a Macro domain in the interval 1275 to 1435 (PNVCFVKGDI…LISKCQITAV (161 aa)). One can recognise a DPUP domain in the interval 1491–1563 (DDARTFVQSN…VAQIKALFLD (73 aa)). The Ubiquitin-like 2 domain maps to 1562-1617 (LDKVDILLTVDGVNFTNRFVPVGESFGKSLGNVFCDGVNVTKHKCDINYKGKVFFQ). The Peptidase C16 2 domain maps to 1631–1892 (SSFNFDQKEL…KIEYKPDLSQ (262 aa)). The active-site For PL2-PRO activity is Cys1671. Zn(2+)-binding residues include Cys1749, Cys1751, Cys1783, and Cys1785. A C4-type 2 zinc finger spans residues 1749 to 1785 (CKCGVKQEQRTGLDAVMHFGTLSREDLEIGYTVDCSC). Residues His1828 and Asp1842 each act as for PL2-PRO activity in the active site. The region spanning 1906–2007 (IKAQFKTFEK…TYFNRPLLVD (102 aa)) is the Nucleic acid-binding domain. The region spanning 2020–2169 (DDSGDSSESG…ADNKVIYTTE (150 aa)) is the G2M domain. 3 helical membrane-spanning segments follow: residues 2138–2158 (TSAC…WIKI), 2199–2219 (ACII…NVIF), and 2221–2241 (DFYL…AQWI). Positions 2138–2385 (TSACFNFIKW…ASFIKLFSLF (248 aa)) are HD1. Residues 2235-2296 (GKIAQWIKNT…AIDVVQYEAD (62 aa)) enclose the 3Ecto domain. Disulfide bonds link Cys2251-Cys2275 and Cys2266-Cys2272. 3 helical membrane-spanning segments follow: residues 2313 to 2333 (LIVS…LISI), 2343 to 2363 (LFML…ANML), and 2365 to 2385 (AHVF…FSLF). A Y1 region spans residues 2383–2473 (SLFKHVAYGC…ELKRPIQPTD (91 aa)). A CoV Nsp3 Y domain is found at 2383 to 2750 (SLFKHVAYGC…LTTPFSLKGG (368 aa)). His2387, Cys2392, Cys2397, Cys2400, Cys2433, His2436, Cys2440, and Cys2443 together coordinate Zn(2+). The tract at residues 2387-2400 (HVAYGCSKSGCLFC) is ZF1. Residues 2433 to 2443 (CSKHQWNCIDC) form a ZF2 region. The segment at 2474 to 2566 (VAYHTVTDVK…MVDKNLITTA (93 aa)) is Y2. The coV-Y stretch occupies residues 2474–2750 (VAYHTVTDVK…LTTPFSLKGG (277 aa)). The segment at 2567-2649 (NTGTSVTETM…DSVMSAVSAG (83 aa)) is Y3. The segment at 2650 to 2750 (LELTDESCNN…LTTPFSLKGG (101 aa)) is Y4. Transmembrane regions (helical) follow at residues 2752-2772 (VFSY…IGLW), 2824-2844 (STFG…VAVI), 3009-3029 (VFDL…FLAL), 3031-3051 (ASSI…YYLI), 3063-3083 (VVFV…VFQV), 3090-3110 (VYAI…SVIM), and 3115-3135 (LVMY…AVVV). The HD2 stretch occupies residues 2752–3135 (VFSYFVYVCF…FCLLYIAVVV (384 aa)). Positions 3149 to 3246 (LGTSVRSDGT…TASVSTSFLQ (98 aa)) constitute a Nsp4C domain. The Peptidase C30 domain maps to 3247–3549 (SGIVKMVNPT…YQQLAGIKLQ (303 aa)). Catalysis depends on for 3CL-PRO activity residues His3287 and Cys3391. The segment at 3319–3775 (LSLTVMSYQM…IISCYWGLFS (457 aa)) is HD3. Helical transmembrane passes span 3558 to 3578 (GTVC…TAFV), 3588 to 3608 (TNMF…MLLV), 3615 to 3635 (LTMY…LVVY), 3657 to 3677 (TYTD…FVTL), 3684 to 3704 (LFSF…WYKG), 3711 to 3731 (ILLM…LSMA), and 3755 to 3775 (IVLL…GLFS). Positions 3837–3925 (SKLTDVKCAN…DYAKDNTVLQ (89 aa)) constitute a RdRp Nsp7 cofactor domain. The region spanning 3926–4122 (ALQSEFVNMA…YNEVSATVLQ (197 aa)) is the RdRp Nsp8 cofactor domain. Residues 4123–4232 (NNELMPAKLK…GTISSTVRLQ (110 aa)) enclose the Nsp9 ssRNA-binding domain. One can recognise an ExoN/MTase coactivator domain in the interval 4233–4370 (AGTATEYASN…CVSTDTTVQS (138 aa)). Residues Cys4306, Cys4309, His4315, Cys4322, Cys4348, Cys4351, Cys4359, and Cys4361 each coordinate Zn(2+). Zinc fingers lie at residues 4306-4322 (CIYC…DGLC) and 4348-4361 (CRVC…SCSC).

It belongs to the coronaviruses polyprotein 1ab family. 3CL-PRO exists as monomer and homodimer. Eight copies of nsp7 and eight copies of nsp8 assemble to form a heterohexadecamer. Nsp9 is a dimer. Nsp10 forms a dodecamer. Specific enzymatic cleavages in vivo by its own proteases yield mature proteins. 3CL-PRO and PL-PRO proteinases are autocatalytically processed.

The protein resides in the host membrane. The protein localises to the host cytoplasm. It is found in the host perinuclear region. The enzyme catalyses Thiol-dependent hydrolysis of ester, thioester, amide, peptide and isopeptide bonds formed by the C-terminal Gly of ubiquitin (a 76-residue protein attached to proteins as an intracellular targeting signal).. The catalysed reaction is TSAVLQ-|-SGFRK-NH2 and SGVTFQ-|-GKFKK the two peptides corresponding to the two self-cleavage sites of the SARS 3C-like proteinase are the two most reactive peptide substrates. The enzyme exhibits a strong preference for substrates containing Gln at P1 position and Leu at P2 position.. It carries out the reaction a 5'-end diphospho-ribonucleoside in mRNA + GTP + H(+) = a 5'-end (5'-triphosphoguanosine)-ribonucleoside in mRNA + diphosphate. The papain-like proteinase 1 (PL1-PRO) and papain-like proteinase 2 (PL2-PRO) are responsible for the cleavages located at the N-terminus of the replicase polyprotein. In addition, PLP2 possesses a deubiquitinating/deISGylating activity and processes both 'Lys-48'- and 'Lys-63'-linked polyubiquitin chains from cellular substrates. Antagonizes innate immune induction of type I interferon by blocking the phosphorylation, dimerization and subsequent nuclear translocation of host IRF-3. Its function is as follows. Responsible for the majority of cleavages as it cleaves the C-terminus of replicase polyprotein at 11 sites. Recognizes substrates containing the core sequence [ILMVF]-Q-|-[SGACN]. Inhibited by the substrate-analog Cbz-Val-Asn-Ser-Thr-Leu-Gln-CMK. Also contains an ADP-ribose-1''-phosphate (ADRP)-binding function. In terms of biological role, nsp7-nsp8 hexadecamer may possibly confer processivity to the polymerase, maybe by binding to dsRNA or by producing primers utilized by the latter. Functionally, catalytic subunit of viral RNA capping enzyme which catalyzes the RNA guanylyltransferase reaction for genomic and sub-genomic RNAs. The kinase-like NiRAN domain of NSP12 transfers RNA to the amino terminus of NSP9, forming a covalent RNA-protein intermediate. Subsequently, the NiRAN domain transfers RNA to GDP, forming the core cap structure GpppA-RNA. The NSP14 and NSP16 methyltransferases then add methyl groups to form functional cap structures. Binds to the 40S ribosomal subunit and inhibits host translation. The nsp1-40S ribosome complex further induces an endonucleolytic cleavage near the 5'UTR of host mRNAs, targeting them for degradation. This inhibits the integrated stress response (ISR) in the infected cell by preventing EIF2S1/eIF2-alpha phosphorylation upstream of stress granule formation and depletes host G3BP1. By suppressing host gene expression, nsp1 facilitates efficient viral gene expression in infected cells and evasion from host immune response. This is Replicase polyprotein 1a from Human coronavirus OC43 (HCoV-OC43).